A 264-amino-acid polypeptide reads, in one-letter code: Apolipoprotein A-I (264 aa).

The first 18 residues, 1–18 (MRVVVVTLALLFLTGTQA), serve as a signal peptide directing secretion. Tandem repeats lie at residues 67–88 (LKLA…EDMA) and 89–110 (PYYK…AELT). The interval 67 to 264 (LKLADNLDTL…LLDELQKTVA (198 aa)) is 10 X approximate tandem repeats. Residues 111–121 (KDLEEVKEKIR) form a 3; half-length repeat. Repeat copies occupy residues 122 to 143 (PFLD…QRLA), 144 to 165 (PVAE…QKLT), 166 to 187 (PVAE…KNLA), 188 to 209 (PYSD…EKGI), and 210 to 231 (PQAA…EKMT). The stretch at 232-242 (PLVQDFKERLT) is one 9; half-length repeat. Repeat unit 10 spans residues 243–264 (PYAENLKTRFISLLDELQKTVA).

This sequence belongs to the apolipoprotein A1/A4/E family. As to expression, major protein of plasma HDL, also found in chylomicrons.

It localises to the secreted. In terms of biological role, participates in the reverse transport of cholesterol from tissues to the liver for excretion by promoting cholesterol efflux from tissues and by acting as a cofactor for the lecithin cholesterol acyltransferase (LCAT). This Anas platyrhynchos (Mallard) protein is Apolipoprotein A-I (APOA1).